The sequence spans 356 residues: Protein pelota homolog (356 aa).

It belongs to the eukaryotic release factor 1 family. Pelota subfamily. Monomer. A divalent metal cation is required as a cofactor.

It is found in the cytoplasm. Its function is as follows. May function in recognizing stalled ribosomes, interact with stem-loop structures in stalled mRNA molecules, and effect endonucleolytic cleavage of the mRNA. May play a role in the release non-functional ribosomes and degradation of damaged mRNAs. Has endoribonuclease activity. The protein is Protein pelota homolog of Pyrococcus furiosus (strain ATCC 43587 / DSM 3638 / JCM 8422 / Vc1).